The following is a 216-amino-acid chain: MEAVIFDMDGVLMDTEPLYFEAYRRVAESYGKPYTEDLHRRIMGVPEREGLPILMEALEIKDSLENFKKRVHEEKKRVFSELLKENPGVREALEFVKSKRIKLALATSTPQREALERLRRLDLEKYFDVMVFGDQVKNGKPDPEIYLLVLERLNVVPEKVVVFEDSKSGVEAAKSAGIERIYGVVHSLNDGKALLEAGAVALVKPEEILNVLKEVL.

The Nucleophile role is filled by aspartate 7.

The protein belongs to the HAD-like hydrolase superfamily. Co(2+) is required as a cofactor. The cofactor is Mg(2+). Requires Mn(2+) as cofactor. It depends on Ni(2+) as a cofactor.

In terms of biological role, displays high phosphatase activity toward erythrose 4-phosphate, fructose 6-phosphate, 2-deoxyglucose 6-phosphate, and mannose 6-phosphate. May have a role in the intracellular metabolism of many phosphorylated carbohydrates. This is Phosphorylated carbohydrates phosphatase TM_1254 from Thermotoga maritima (strain ATCC 43589 / DSM 3109 / JCM 10099 / NBRC 100826 / MSB8).